A 117-amino-acid chain; its full sequence is Ig heavy chain V region 5-84 (117 aa).

The first 19 residues, 1-19 (MNFGLSLIFLVLVLKGVLC), serve as a signal peptide directing secretion. The segment at 20–49 (EVKLVESGGGLVQPGGSLKLSCAASGFTFS) is framework-1. Residues C41 and C115 are joined by a disulfide bond. A complementarity-determining-1 region spans residues 50-54 (SYTMS). Residues 55–68 (WVRQTPEKRLEWVA) form a framework-2 region. The complementarity-determining-2 stretch occupies residues 69-85 (YISNGGGSTYYPDTVKG). The interval 86–117 (RFTISRDNAKNNLYLQMSSLKSEDTAMYYCAR) is framework-3.

The protein is Ig heavy chain V region 5-84 of Mus musculus (Mouse).